A 48-amino-acid chain; its full sequence is Protein TUNAR (48 aa).

A disordered region spans residues 1-20; that stretch reads MVITSENDEDRGGQEKESKE. A compositionally biased stretch (basic and acidic residues) spans 10-20; it reads DRGGQEKESKE. Residues 24-44 traverse the membrane as a helical segment; that stretch reads LAMLGIIGTILNLIVIIFVYI.

Interacts with ATPase ATP2A2/SERCA2. Interacts with ATPase ATP2A3/SERCA3; the interaction occurs at low levels in low glucose conditions and is increased by high glucose levels. Highly expressed in pancreatic islets where it is enriched in the insulin-producing beta cells.

Its subcellular location is the endoplasmic reticulum membrane. The protein resides in the extracellular vesicle membrane. Its function is as follows. In neurons, plays a role in the regulation of intracellular Ca(2+), possibly by acting as an activator of ATP2A2/SERCA2, thus increasing the efficiency with which Ca(2+) is removed from the cytoplasm. Inhibits differentiation of embryonic stem cells into neurons and inhibits neurite outgrowth, likely as a result of its role in intracellular Ca(2+) regulation. In pancreatic beta cells, lowers Ca(2+) levels in the endoplasmic reticulum and enhances glucose-stimulated insulin secretion. The polypeptide is Protein TUNAR (Homo sapiens (Human)).